Here is a 288-residue protein sequence, read N- to C-terminus: Carbon monoxide dehydrogenase medium chain (288 aa).

The 177-residue stretch at 1 to 177 folds into the FAD-binding PCMH-type domain; it reads MIPGSFDYHR…TAIRIPVPPT (177 aa). Residues 32–36 and 111–115 contribute to the FAD site; these read AGGHS and TIGGN.

In terms of assembly, dimer of heterotrimers. Each heterotrimer consists of a large, a medium and a small subunit. The cofactor is FAD.

It carries out the reaction CO + a quinone + H2O = a quinol + CO2. Catalyzes the oxidation of carbon monoxide to carbon dioxide. This chain is Carbon monoxide dehydrogenase medium chain (coxM), found in Afipia carboxidovorans (strain ATCC 49405 / DSM 1227 / KCTC 32145 / OM5) (Oligotropha carboxidovorans).